A 124-amino-acid chain; its full sequence is Multifunctional methyltransferase subunit TRM112 homolog A (124 aa).

Residues 2–120 (RLITHNMLSC…NKGIPNMLLH (119 aa)) enclose the TRM112 domain.

It belongs to the TRM112 family. As to quaternary structure, interacts with TRM9.

In terms of biological role, acts as an activator of both rRNA/tRNA and protein methyltransferases. Required for TRM9 tRNA methyltransferase activity. Involved in the regulation of cell division progression during organ growth. Required for the expression of cell cycle-related genes, and the G2-M phase progression during organogenesis. The polypeptide is Multifunctional methyltransferase subunit TRM112 homolog A (Arabidopsis thaliana (Mouse-ear cress)).